Consider the following 98-residue polypeptide: NADH-ubiquinone oxidoreductase chain 4L (98 aa).

3 consecutive transmembrane segments (helical) span residues M1 to I21, S28 to I48, and A59 to V79.

This sequence belongs to the complex I subunit 4L family. As to quaternary structure, core subunit of respiratory chain NADH dehydrogenase (Complex I) which is composed of 45 different subunits.

It is found in the mitochondrion inner membrane. The catalysed reaction is a ubiquinone + NADH + 5 H(+)(in) = a ubiquinol + NAD(+) + 4 H(+)(out). Core subunit of the mitochondrial membrane respiratory chain NADH dehydrogenase (Complex I) which catalyzes electron transfer from NADH through the respiratory chain, using ubiquinone as an electron acceptor. Part of the enzyme membrane arm which is embedded in the lipid bilayer and involved in proton translocation. The chain is NADH-ubiquinone oxidoreductase chain 4L (MT-ND4L) from Perameles gunnii (Eastern barred bandicoot).